The primary structure comprises 178 residues: Interleukin-1 receptor antagonist protein (178 aa).

A signal peptide spans 1-26 (MEICRGPYSHLISLLLILLFRSESAG). A disulfide bridge links Cys-92 with Cys-142. Asn-110 is a glycosylation site (N-linked (GlcNAc...) asparagine).

The protein belongs to the IL-1 family.

It localises to the secreted. Functionally, anti-inflammatory antagonist of interleukin-1 family of proinflammatory cytokines such as interleukin-1beta/IL1B and interleukin-1alpha/IL1A. Protects from immune dysregulation and uncontrolled systemic inflammation triggered by IL1 for a range of innate stimulatory agents such as pathogens. The chain is Interleukin-1 receptor antagonist protein (Il1rn) from Rattus norvegicus (Rat).